A 161-amino-acid polypeptide reads, in one-letter code: ATP synthase subunit b (161 aa).

A helical membrane pass occupies residues 2-22; sequence VIEWGTALYQLLAFAVLLLIL.

It belongs to the ATPase B chain family. F-type ATPases have 2 components, F(1) - the catalytic core - and F(0) - the membrane proton channel. F(1) has five subunits: alpha(3), beta(3), gamma(1), delta(1), epsilon(1). F(0) has three main subunits: a(1), b(2) and c(10-14). The alpha and beta chains form an alternating ring which encloses part of the gamma chain. F(1) is attached to F(0) by a central stalk formed by the gamma and epsilon chains, while a peripheral stalk is formed by the delta and b chains.

The protein localises to the cell membrane. F(1)F(0) ATP synthase produces ATP from ADP in the presence of a proton or sodium gradient. F-type ATPases consist of two structural domains, F(1) containing the extramembraneous catalytic core and F(0) containing the membrane proton channel, linked together by a central stalk and a peripheral stalk. During catalysis, ATP synthesis in the catalytic domain of F(1) is coupled via a rotary mechanism of the central stalk subunits to proton translocation. Functionally, component of the F(0) channel, it forms part of the peripheral stalk, linking F(1) to F(0). The protein is ATP synthase subunit b of Shouchella clausii (strain KSM-K16) (Alkalihalobacillus clausii).